The chain runs to 428 residues: Flotillin-2 (428 aa).

Residue glycine 2 is the site of N-myristoyl glycine attachment. A lipid anchor (S-palmitoyl cysteine; by ZDHHC5) is attached at cysteine 4. Cysteine 19 is lipidated: S-palmitoyl cysteine. Cysteine 20 is lipidated: S-palmitoyl cysteine; by ZDHHC5. The residue at position 405 (serine 405) is a Phosphoserine.

It belongs to the band 7/mec-2 family. Flotillin subfamily. In terms of assembly, heterooligomeric complex of flotillin-1 and flotillin-2 and caveolin-1 and caveolin-2. Interacts with ECPAS. Post-translationally, ZDHHC5-catalyzed palmitoylation may be required for the formation of higher-order complexes and for neurite outgrowth in cultured neural stem cells.

It is found in the cell membrane. The protein resides in the membrane. Its subcellular location is the caveola. It localises to the endosome. In terms of biological role, may act as a scaffolding protein within caveolar membranes, functionally participating in formation of caveolae or caveolae-like vesicles. May be involved in epidermal cell adhesion and epidermal structure and function. This chain is Flotillin-2 (FLOT2), found in Bos taurus (Bovine).